Here is a 285-residue protein sequence, read N- to C-terminus: MFKNYIEITKPGIIIGNSTLITGGFLFASRHAAFNYVLFIYTILGASLVIASACVFNNLIDIDIDKKMKRTSNRVLSKKLLPVFSVFNFAIFLGVLGLSILGCLVNFISMSLAVFGFFIYVVLYTMFYKRRSFYSTFIGSFSGSTPSVIGYTAVSNTIDICSILLFVIVIFWQMSHFYSISIMRIKDYREAKIPVFSVVKGVAITKKHIFFYVLNFSFFSSLFTFLGYLSYNFLLLSSIVNFYWSFLSYSNIKKNNDKKNARKLFYFSIIVIVFFNFLISIDVFF.

The next 9 membrane-spanning stretches (helical) occupy residues 8–28, 36–56, 80–100, 107–127, 133–153, 163–183, 209–229, 232–252, and 265–285; these read ITKPGIIIGNSTLITGGFLFA, YVLFIYTILGASLVIASACVF, LLPVFSVFNFAIFLGVLGLSI, FISMSLAVFGFFIYVVLYTMF, FYSTFIGSFSGSTPSVIGYTA, ILLFVIVIFWQMSHFYSISIM, IFFYVLNFSFFSSLFTFLGYL, NFLLLSSIVNFYWSFLSYSNI, and FYFSIIVIVFFNFLISIDVFF.

This sequence belongs to the UbiA prenyltransferase family. Protoheme IX farnesyltransferase subfamily.

It is found in the cell membrane. It carries out the reaction heme b + (2E,6E)-farnesyl diphosphate + H2O = Fe(II)-heme o + diphosphate. The protein operates within porphyrin-containing compound metabolism; heme O biosynthesis; heme O from protoheme: step 1/1. Functionally, converts heme B (protoheme IX) to heme O by substitution of the vinyl group on carbon 2 of heme B porphyrin ring with a hydroxyethyl farnesyl side group. This is Protoheme IX farnesyltransferase from Buchnera aphidicola subsp. Acyrthosiphon pisum (strain Tuc7).